The chain runs to 273 residues: Phycocyanobilin lyase subunit alpha (273 aa).

It belongs to the CpcE/RpcE/PecE family. As to quaternary structure, cpcE and CpcF associate to form a lyase.

Required for the chromophorylation of the cpcA gene product. The chain is Phycocyanobilin lyase subunit alpha (cpcE) from Synechococcus elongatus (strain ATCC 33912 / PCC 7942 / FACHB-805) (Anacystis nidulans R2).